The sequence spans 69 residues: Conotoxin Eb6.19 (69 aa).

Residues 1 to 17 (VLIIAVLFLTACQLTTA) form the signal peptide. Positions 18–41 (ETYSRGRQKHRARRSTDKNSKWTR) are excised as a propeptide. Intrachain disulfides connect cysteine 43–cysteine 57, cysteine 50–cysteine 61, and cysteine 56–cysteine 68.

Belongs to the conotoxin O1 superfamily. As to expression, expressed by the venom duct.

It localises to the secreted. The chain is Conotoxin Eb6.19 (E1) from Conus ebraeus (Hebrew cone).